The following is a 315-amino-acid chain: 4-hydroxy-3-methylbut-2-enyl diphosphate reductase (315 aa).

Cysteine 12 lines the [4Fe-4S] cluster pocket. (2E)-4-hydroxy-3-methylbut-2-enyl diphosphate-binding residues include histidine 41 and histidine 74. 2 residues coordinate dimethylallyl diphosphate: histidine 41 and histidine 74. Isopentenyl diphosphate is bound by residues histidine 41 and histidine 74. Residue cysteine 96 coordinates [4Fe-4S] cluster. (2E)-4-hydroxy-3-methylbut-2-enyl diphosphate is bound at residue histidine 124. A dimethylallyl diphosphate-binding site is contributed by histidine 124. Isopentenyl diphosphate is bound at residue histidine 124. Glutamate 126 (proton donor) is an active-site residue. Position 168 (threonine 168) interacts with (2E)-4-hydroxy-3-methylbut-2-enyl diphosphate. Cysteine 198 lines the [4Fe-4S] cluster pocket. (2E)-4-hydroxy-3-methylbut-2-enyl diphosphate-binding residues include serine 226, serine 227, asparagine 228, and serine 270. Dimethylallyl diphosphate is bound by residues serine 226, serine 227, asparagine 228, and serine 270. Residues serine 226, serine 227, asparagine 228, and serine 270 each contribute to the isopentenyl diphosphate site.

Belongs to the IspH family. [4Fe-4S] cluster is required as a cofactor.

It carries out the reaction isopentenyl diphosphate + 2 oxidized [2Fe-2S]-[ferredoxin] + H2O = (2E)-4-hydroxy-3-methylbut-2-enyl diphosphate + 2 reduced [2Fe-2S]-[ferredoxin] + 2 H(+). The enzyme catalyses dimethylallyl diphosphate + 2 oxidized [2Fe-2S]-[ferredoxin] + H2O = (2E)-4-hydroxy-3-methylbut-2-enyl diphosphate + 2 reduced [2Fe-2S]-[ferredoxin] + 2 H(+). The protein operates within isoprenoid biosynthesis; dimethylallyl diphosphate biosynthesis; dimethylallyl diphosphate from (2E)-4-hydroxy-3-methylbutenyl diphosphate: step 1/1. Its pathway is isoprenoid biosynthesis; isopentenyl diphosphate biosynthesis via DXP pathway; isopentenyl diphosphate from 1-deoxy-D-xylulose 5-phosphate: step 6/6. Functionally, catalyzes the conversion of 1-hydroxy-2-methyl-2-(E)-butenyl 4-diphosphate (HMBPP) into a mixture of isopentenyl diphosphate (IPP) and dimethylallyl diphosphate (DMAPP). Acts in the terminal step of the DOXP/MEP pathway for isoprenoid precursor biosynthesis. This is 4-hydroxy-3-methylbut-2-enyl diphosphate reductase from Pseudomonas putida (strain ATCC 700007 / DSM 6899 / JCM 31910 / BCRC 17059 / LMG 24140 / F1).